A 193-amino-acid polypeptide reads, in one-letter code: Holliday junction branch migration complex subunit RuvA (193 aa).

A domain I region spans residues 1-64; it reads MIGRIAGTLI…EDAHLLYGFG (64 aa). Residues 65-143 form a domain II region; it reads TAAERETFRQ…ADLGTVPGGP (79 aa). The tract at residues 144-151 is flexible linker; that stretch reads AVSDDAVD. A domain III region spans residues 151-193; it reads DVLNALLALGYSDKEAALAIKQVPAGTGVSEGIKLALKALSKG.

Belongs to the RuvA family. Homotetramer. Forms an RuvA(8)-RuvB(12)-Holliday junction (HJ) complex. HJ DNA is sandwiched between 2 RuvA tetramers; dsDNA enters through RuvA and exits via RuvB. An RuvB hexamer assembles on each DNA strand where it exits the tetramer. Each RuvB hexamer is contacted by two RuvA subunits (via domain III) on 2 adjacent RuvB subunits; this complex drives branch migration. In the full resolvosome a probable DNA-RuvA(4)-RuvB(12)-RuvC(2) complex forms which resolves the HJ.

The protein resides in the cytoplasm. Functionally, the RuvA-RuvB-RuvC complex processes Holliday junction (HJ) DNA during genetic recombination and DNA repair, while the RuvA-RuvB complex plays an important role in the rescue of blocked DNA replication forks via replication fork reversal (RFR). RuvA specifically binds to HJ cruciform DNA, conferring on it an open structure. The RuvB hexamer acts as an ATP-dependent pump, pulling dsDNA into and through the RuvAB complex. HJ branch migration allows RuvC to scan DNA until it finds its consensus sequence, where it cleaves and resolves the cruciform DNA. The chain is Holliday junction branch migration complex subunit RuvA from Ralstonia pickettii (strain 12J).